An 83-amino-acid chain; its full sequence is Cell division topological specificity factor (83 aa).

The protein belongs to the MinE family.

Functionally, prevents the cell division inhibition by proteins MinC and MinD at internal division sites while permitting inhibition at polar sites. This ensures cell division at the proper site by restricting the formation of a division septum at the midpoint of the long axis of the cell. The polypeptide is Cell division topological specificity factor (Alcanivorax borkumensis (strain ATCC 700651 / DSM 11573 / NCIMB 13689 / SK2)).